The sequence spans 83 residues: Acyl carrier protein (83 aa).

The Carrier domain occupies 2-77 (STIEEKVKTI…AAIDFISNSH (76 aa)). An O-(pantetheine 4'-phosphoryl)serine modification is found at serine 37.

Belongs to the acyl carrier protein (ACP) family. Post-translationally, 4'-phosphopantetheine is transferred from CoA to a specific serine of apo-ACP by AcpS. This modification is essential for activity because fatty acids are bound in thioester linkage to the sulfhydryl of the prosthetic group.

Its subcellular location is the cytoplasm. It functions in the pathway lipid metabolism; fatty acid biosynthesis. Its function is as follows. Carrier of the growing fatty acid chain in fatty acid biosynthesis. The protein is Acyl carrier protein of Blochmanniella pennsylvanica (strain BPEN).